The sequence spans 446 residues: 5-hydroxytryptamine receptor 7 (446 aa).

Over 1 to 84 (MMGVNSSGRP…INYGRAEKVV (84 aa)) the chain is Extracellular. N-linked (GlcNAc...) asparagine glycans are attached at residues Asn-5 and Asn-67. The helical transmembrane segment at 85 to 109 (IGSILTLITLLTIAGNCLVVISVCF) threads the bilayer. Residues 110-119 (VKKLRQPSNY) lie on the Cytoplasmic side of the membrane. The helical transmembrane segment at 120–141 (LIVSLALADLSVAVAVIPFVSV) threads the bilayer. Over 142-153 (TDLIGGKWIFGH) the chain is Extracellular. A helical membrane pass occupies residues 154–179 (FFCNVFIAMDVMCCTASIMTLCVISI). Residues Cys-156 and Cys-232 are joined by a disulfide bond. Asp-163 contributes to the serotonin binding site. The Cytoplasmic portion of the chain corresponds to 180 to 199 (DRYLGITRPLTYPVRQNGKC). Residues 200-220 (MPKMILSVWLLSASITLPPLF) traverse the membrane as a helical segment. The Extracellular segment spans residues 221 to 238 (GWAQNVNDDKVCLISQDF). The helical transmembrane segment at 239 to 261 (GYTIYSTAVAFYIPMSVMLFMYY) threads the bilayer. Over 262–327 (RIYKAARKSA…SIFKREQKAA (66 aa)) the chain is Cytoplasmic. Residues 328–353 (TTLGIIVGAFTVCWLPFFLLSTARPF) form a helical membrane-spanning segment. Over 354-364 (ICGTACSCIPL) the chain is Extracellular. The helical transmembrane segment at 365–388 (WVERTCLWLGYANSLINPFIYAFF) threads the bilayer. Residues 389–446 (NRDLRTTYRSLLQCQYRNINRKLSAAGMHEALKLAERPERPECVLQNSDYCRKKGHDS) are Cytoplasmic-facing. A lipid anchor (S-palmitoyl cysteine) is attached at Cys-402.

Belongs to the G-protein coupled receptor 1 family.

The protein localises to the cell membrane. In terms of biological role, G-protein coupled receptor for 5-hydroxytryptamine (serotonin), a biogenic hormone that functions as a neurotransmitter, a hormone and a mitogen. Ligand binding causes a conformation change that triggers signaling via guanine nucleotide-binding proteins (G proteins) and modulates the activity of downstream effectors. HTR7 is coupled to G(s) G alpha proteins and mediates activation of adenylate cyclase activity. The sequence is that of 5-hydroxytryptamine receptor 7 (HTR7) from Cavia porcellus (Guinea pig).